The sequence spans 306 residues: Serine/threonine-protein phosphatase PP-X homolog 4 (306 aa).

Positions 53, 55, 81, and 113 each coordinate Mn(2+). His114 serves as the catalytic Proton donor. Mn(2+) is bound by residues His163 and His237.

The protein belongs to the PPP phosphatase family. PP-4 (PP-X) subfamily. Requires Mn(2+) as cofactor.

It carries out the reaction O-phospho-L-seryl-[protein] + H2O = L-seryl-[protein] + phosphate. It catalyses the reaction O-phospho-L-threonyl-[protein] + H2O = L-threonyl-[protein] + phosphate. The chain is Serine/threonine-protein phosphatase PP-X homolog 4 (Ppx4) from Paramecium tetraurelia.